The following is a 245-amino-acid chain: UPF0246 protein Cgl1995/cg2186 (245 aa).

This sequence belongs to the UPF0246 family.

This chain is UPF0246 protein Cgl1995/cg2186, found in Corynebacterium glutamicum (strain ATCC 13032 / DSM 20300 / JCM 1318 / BCRC 11384 / CCUG 27702 / LMG 3730 / NBRC 12168 / NCIMB 10025 / NRRL B-2784 / 534).